The chain runs to 117 residues: uncharacterized protein (117 aa).

The next 3 helical transmembrane spans lie at 32 to 52 (VSSS…VTVV), 56 to 76 (VGVA…VTLL), and 87 to 107 (LSWC…SFFF).

The protein localises to the membrane. This is an uncharacterized protein from Saccharomyces cerevisiae (strain ATCC 204508 / S288c) (Baker's yeast).